The chain runs to 509 residues: Lanosterol 14-alpha demethylase (509 aa).

Residues 30 to 50 (GNLLSMLLIACAFTLSLVYLF) form a helical membrane-spanning segment. A heme-binding site is contributed by cysteine 455.

This sequence belongs to the cytochrome P450 family. Heme is required as a cofactor. Post-translationally, ubiquitinated by MARCHF6, leading to proteasomal degradation.

The protein resides in the endoplasmic reticulum membrane. Its subcellular location is the microsome membrane. It carries out the reaction a 14alpha-methyl steroid + 3 reduced [NADPH--hemoprotein reductase] + 3 O2 = a Delta(14) steroid + formate + 3 oxidized [NADPH--hemoprotein reductase] + 4 H2O + 4 H(+). The enzyme catalyses lanosterol + 3 reduced [NADPH--hemoprotein reductase] + 3 O2 = 4,4-dimethyl-5alpha-cholesta-8,14,24-trien-3beta-ol + formate + 3 oxidized [NADPH--hemoprotein reductase] + 4 H2O + 4 H(+). The catalysed reaction is 24,25-dihydrolanosterol + 3 reduced [NADPH--hemoprotein reductase] + 3 O2 = 4,4-dimethyl-8,14-cholestadien-3beta-ol + formate + 3 oxidized [NADPH--hemoprotein reductase] + 4 H2O + 4 H(+). It catalyses the reaction a 14alpha-methyl steroid + reduced [NADPH--hemoprotein reductase] + O2 = a 14alpha-hydroxymethyl steroid + oxidized [NADPH--hemoprotein reductase] + H2O + H(+). It carries out the reaction a 14alpha-hydroxymethyl steroid + reduced [NADPH--hemoprotein reductase] + O2 = a 14alpha-formyl steroid + oxidized [NADPH--hemoprotein reductase] + 2 H2O + H(+). The enzyme catalyses a 14alpha-formyl steroid + reduced [NADPH--hemoprotein reductase] + O2 = a Delta(14) steroid + formate + oxidized [NADPH--hemoprotein reductase] + H2O + 2 H(+). The catalysed reaction is lanosterol + reduced [NADPH--hemoprotein reductase] + O2 = 32-hydroxylanosterol + oxidized [NADPH--hemoprotein reductase] + H2O + H(+). It catalyses the reaction 32-hydroxylanosterol + reduced [NADPH--hemoprotein reductase] + O2 = 32-oxolanosterol + oxidized [NADPH--hemoprotein reductase] + 2 H2O + H(+). It carries out the reaction 32-oxolanosterol + reduced [NADPH--hemoprotein reductase] + O2 = 4,4-dimethyl-5alpha-cholesta-8,14,24-trien-3beta-ol + formate + oxidized [NADPH--hemoprotein reductase] + H2O + 2 H(+). The enzyme catalyses 24,25-dihydrolanosterol + reduced [NADPH--hemoprotein reductase] + O2 = 32-hydroxy-24,25-dihydrolanosterol + oxidized [NADPH--hemoprotein reductase] + H2O + H(+). The catalysed reaction is 32-hydroxy-24,25-dihydrolanosterol + reduced [NADPH--hemoprotein reductase] + O2 = 32-oxo-24,25-dihydrolanosterol + oxidized [NADPH--hemoprotein reductase] + 2 H2O + H(+). It catalyses the reaction 32-oxo-24,25-dihydrolanosterol + reduced [NADPH--hemoprotein reductase] + O2 = 4,4-dimethyl-8,14-cholestadien-3beta-ol + formate + oxidized [NADPH--hemoprotein reductase] + H2O + 2 H(+). It functions in the pathway steroid biosynthesis; zymosterol biosynthesis; zymosterol from lanosterol: step 1/6. With respect to regulation, inhibited by azalanstat. Inhibited by azole antifungal agents ketoconazole, itraconazole and fluconazole. Its function is as follows. Sterol 14alpha-demethylase that plays a critical role in the cholesterol biosynthesis pathway, being cholesterol the major sterol component in mammalian membranes as well as a precursor for bile acid and steroid hormone synthesis. Cytochrome P450 monooxygenase that catalyzes the three-step oxidative removal of the 14alpha-methyl group (C-32) of sterols such as lanosterol (lanosta-8,24-dien-3beta-ol) and 24,25-dihydrolanosterol (DHL) in the form of formate, and converts the sterols to 4,4-dimethyl-5alpha-cholesta-8,14,24-trien-3beta-ol and 4,4-dimethyl-8,14-cholestadien-3beta-ol, respectively, which are intermediates of cholesterol biosynthesis. Can also demethylate substrates not intrinsic to mammals, such as eburicol (24-methylene-24,25-dihydrolanosterol), but at a lower rate than DHL. This is Lanosterol 14-alpha demethylase from Macaca fascicularis (Crab-eating macaque).